We begin with the raw amino-acid sequence, 447 residues long: N-succinylarginine dihydrolase (447 aa).

Residues 19–28 (AGLSFGNEAS), asparagine 110, and 137–138 (HR) contribute to the substrate site. Residue glutamate 174 is part of the active site. Residue arginine 212 coordinates substrate. The active site involves histidine 248. Substrate-binding residues include aspartate 250 and asparagine 359. Cysteine 365 serves as the catalytic Nucleophile.

It belongs to the succinylarginine dihydrolase family. As to quaternary structure, homodimer.

It catalyses the reaction N(2)-succinyl-L-arginine + 2 H2O + 2 H(+) = N(2)-succinyl-L-ornithine + 2 NH4(+) + CO2. Its pathway is amino-acid degradation; L-arginine degradation via AST pathway; L-glutamate and succinate from L-arginine: step 2/5. Catalyzes the hydrolysis of N(2)-succinylarginine into N(2)-succinylornithine, ammonia and CO(2). The sequence is that of N-succinylarginine dihydrolase from Escherichia coli (strain SE11).